The chain runs to 397 residues: Serpin B10 (397 aa).

The short motif at 74–77 (KKRK) is the Nuclear localization signal element.

This sequence belongs to the serpin family. Ov-serpin subfamily.

It localises to the nucleus. It is found in the cytoplasm. Its function is as follows. Protease inhibitor that may play a role in the regulation of protease activities during hematopoiesis and apoptosis induced by TNF. May regulate protease activities in the cytoplasm and in the nucleus. This chain is Serpin B10 (Serpinb10), found in Mus musculus (Mouse).